The chain runs to 208 residues: Peptidyl-tRNA hydrolase (208 aa).

Residue Tyr19 participates in tRNA binding. His24 acts as the Proton acceptor in catalysis. TRNA-binding residues include Phe71, Asn73, and Asn119.

Belongs to the PTH family. In terms of assembly, monomer.

It localises to the cytoplasm. It carries out the reaction an N-acyl-L-alpha-aminoacyl-tRNA + H2O = an N-acyl-L-amino acid + a tRNA + H(+). In terms of biological role, hydrolyzes ribosome-free peptidyl-tRNAs (with 1 or more amino acids incorporated), which drop off the ribosome during protein synthesis, or as a result of ribosome stalling. Its function is as follows. Catalyzes the release of premature peptidyl moieties from peptidyl-tRNA molecules trapped in stalled 50S ribosomal subunits, and thus maintains levels of free tRNAs and 50S ribosomes. This Synechococcus elongatus (strain ATCC 33912 / PCC 7942 / FACHB-805) (Anacystis nidulans R2) protein is Peptidyl-tRNA hydrolase.